The chain runs to 317 residues: 4-diphosphocytidyl-2-C-methyl-D-erythritol kinase (317 aa).

Residue Lys17 is part of the active site. An ATP-binding site is contributed by 109–119 (PVAGGMGGGSA). The active site involves Asp151.

It belongs to the GHMP kinase family. IspE subfamily.

It catalyses the reaction 4-CDP-2-C-methyl-D-erythritol + ATP = 4-CDP-2-C-methyl-D-erythritol 2-phosphate + ADP + H(+). Its pathway is isoprenoid biosynthesis; isopentenyl diphosphate biosynthesis via DXP pathway; isopentenyl diphosphate from 1-deoxy-D-xylulose 5-phosphate: step 3/6. In terms of biological role, catalyzes the phosphorylation of the position 2 hydroxy group of 4-diphosphocytidyl-2C-methyl-D-erythritol. The polypeptide is 4-diphosphocytidyl-2-C-methyl-D-erythritol kinase (Paenarthrobacter aurescens (strain TC1)).